A 500-amino-acid chain; its full sequence is L-arabinose isomerase (500 aa).

Residues Glu306, Glu333, His350, and His450 each coordinate Mn(2+).

This sequence belongs to the arabinose isomerase family. Homohexamer. Mn(2+) serves as cofactor.

It catalyses the reaction beta-L-arabinopyranose = L-ribulose. The protein operates within carbohydrate degradation; L-arabinose degradation via L-ribulose; D-xylulose 5-phosphate from L-arabinose (bacterial route): step 1/3. In terms of biological role, catalyzes the conversion of L-arabinose to L-ribulose. This Klebsiella pneumoniae (strain 342) protein is L-arabinose isomerase.